The sequence spans 159 residues: Ribosomal RNA large subunit methyltransferase H (159 aa).

S-adenosyl-L-methionine is bound by residues Leu-76, Gly-108, and 127 to 132 (FSPMTF).

This sequence belongs to the RNA methyltransferase RlmH family. As to quaternary structure, homodimer.

The protein resides in the cytoplasm. It catalyses the reaction pseudouridine(1915) in 23S rRNA + S-adenosyl-L-methionine = N(3)-methylpseudouridine(1915) in 23S rRNA + S-adenosyl-L-homocysteine + H(+). In terms of biological role, specifically methylates the pseudouridine at position 1915 (m3Psi1915) in 23S rRNA. This is Ribosomal RNA large subunit methyltransferase H from Alkaliphilus oremlandii (strain OhILAs) (Clostridium oremlandii (strain OhILAs)).